A 253-amino-acid polypeptide reads, in one-letter code: Peptidase inhibitor R3HDML (253 aa).

An N-terminal signal peptide occupies residues 1-24 (MPLLPSTVGLAGLLFWAGQAVNAL). Positions 25-56 (IMPNATPAPAQPESTAMRLLSGLEVPRYRRKR) are excised as a propeptide. Residues 67–207 (LDYHNHIRAS…HRAAYLVCNY (141 aa)) enclose the SCP domain. N-linked (GlcNAc...) asparagine glycosylation is present at Asn120.

It belongs to the CRISP family.

It is found in the secreted. Its function is as follows. Putative serine protease inhibitor. The protein is Peptidase inhibitor R3HDML (R3HDML) of Homo sapiens (Human).